Reading from the N-terminus, the 312-residue chain is 4-hydroxyphenylacetate decarboxylase activating enzyme (312 aa).

Positions 16–299 (HDGPGCRTSV…MEHLQQLYLD (284 aa)) constitute a Radical SAM core domain. [4Fe-4S] cluster is bound by residues cysteine 30, cysteine 34, cysteine 37, cysteine 56, cysteine 62, cysteine 65, and cysteine 101. S-adenosyl-L-methionine is bound at residue 36–38 (WCA). 4Fe-4S ferredoxin-type domains lie at 47–79 (KHIMVAENVCKWKNGCRSCINACSHDSIKFSED) and 80–112 (GKLKISWDTCEKCETFDCVNMCPNNALKQCVKE). S-adenosyl-L-methionine-binding positions include glycine 140, 189 to 191 (DVK), and histidine 263.

The protein belongs to the organic radical-activating enzymes family. In terms of assembly, monomer. The cofactor is [4Fe-4S] cluster.

The catalysed reaction is glycyl-[protein] + reduced [flavodoxin] + S-adenosyl-L-methionine = glycin-2-yl radical-[protein] + semiquinone [flavodoxin] + 5'-deoxyadenosine + L-methionine + H(+). In terms of biological role, catalyzes activation of 4-hydroxyphenylacetate decarboxylase under anaerobic conditions by generation of an organic free radical on a glycine residue, via a homolytic cleavage of S-adenosyl-L-methionine (SAM). This is 4-hydroxyphenylacetate decarboxylase activating enzyme from Clostridium scatologenes.